The following is a 40-amino-acid chain: Alpha-conotoxin-like Qc1.1c (40 aa).

Positions 1 to 19 (SDGRNTAANDKASNLMALR) are excised as a propeptide. 2 disulfides stabilise this stretch: Cys-22–Cys-28 and Cys-23–Cys-36. The tract at residues 24 to 26 (PNP) is lacks the Ser-Xaa-Pro motif that is crucial for potent interaction with nAChR.

It belongs to the conotoxin A superfamily. Expressed by the venom duct.

It is found in the secreted. Alpha-conotoxins act on postsynaptic membranes, they bind to the nicotinic acetylcholine receptors (nAChR) and thus inhibit them. Has possibly a distinct nAChR binding mode from other alpha-conotoxins, due to a different three residue motif (lacks the Ser-Xaa-Pro motif). The polypeptide is Alpha-conotoxin-like Qc1.1c (Conus quercinus (Oak cone)).